A 459-amino-acid polypeptide reads, in one-letter code: tRNA modification GTPase MnmE (459 aa).

3 residues coordinate (6S)-5-formyl-5,6,7,8-tetrahydrofolate: arginine 22, glutamate 85, and arginine 124. Positions glycine 221 to phenylalanine 380 constitute a TrmE-type G domain. Residue asparagine 231 participates in K(+) binding. Residues asparagine 231–serine 236, threonine 250–threonine 256, and aspartate 275–glycine 278 each bind GTP. Mg(2+) is bound at residue serine 235. Residues threonine 250, valine 252, and threonine 255 each coordinate K(+). Residue threonine 256 coordinates Mg(2+). Position 459 (lysine 459) interacts with (6S)-5-formyl-5,6,7,8-tetrahydrofolate.

This sequence belongs to the TRAFAC class TrmE-Era-EngA-EngB-Septin-like GTPase superfamily. TrmE GTPase family. In terms of assembly, homodimer. Heterotetramer of two MnmE and two MnmG subunits. The cofactor is K(+).

It is found in the cytoplasm. Exhibits a very high intrinsic GTPase hydrolysis rate. Involved in the addition of a carboxymethylaminomethyl (cmnm) group at the wobble position (U34) of certain tRNAs, forming tRNA-cmnm(5)s(2)U34. The protein is tRNA modification GTPase MnmE of Staphylococcus aureus (strain MW2).